The sequence spans 272 residues: Hemin import ATP-binding protein HmuV (272 aa).

In terms of domain architecture, ABC transporter spans 2 to 255 (LNADHLHVAR…EPIARCYGFR (254 aa)). Position 34-41 (34-41 (GRNGAGKS)) interacts with ATP.

This sequence belongs to the ABC transporter superfamily. Heme (hemin) importer (TC 3.A.1.14.5) family. The complex is composed of two ATP-binding proteins (HmuV), two transmembrane proteins (HmuU) and a solute-binding protein (HmuT).

Its subcellular location is the cell inner membrane. Part of the ABC transporter complex HmuTUV involved in hemin import. Responsible for energy coupling to the transport system. The chain is Hemin import ATP-binding protein HmuV from Burkholderia mallei (strain ATCC 23344).